The following is a 40-amino-acid chain: uncharacterized protein (40 aa).

Residues 1-14 (MNRMLSLSVQSQRA) are compositionally biased toward polar residues. Residues 1–25 (MNRMLSLSVQSQRAPASPSPYGLKI) are disordered.

This is an uncharacterized protein from Treponema pallidum (strain Nichols).